The following is a 60-amino-acid chain: UPF0434 protein YPA_0693 (60 aa).

Belongs to the UPF0434 family.

This Yersinia pestis bv. Antiqua (strain Antiqua) protein is UPF0434 protein YPA_0693.